The sequence spans 496 residues: Pituitary adenylate cyclase-activating polypeptide type I receptor (496 aa).

Positions 1 to 20 (MARTLQLSLTALLLLPMAIA) are cleaved as a signal peptide. The Extracellular portion of the chain corresponds to 21-152 (MHSDCIFKKE…SGDQDYYYLS (132 aa)). 3 disulfides stabilise this stretch: Cys34/Cys63, Cys54/Cys118, and Cys77/Cys134. N-linked (GlcNAc...) asparagine glycans are attached at residues Asn48, Asn60, and Asn117. The interval 125–139 (EPFPHYFDACGFDDY) is important for ADCYAP1/PACAP ligand binding and specificity. The segment at 125–139 (EPFPHYFDACGFDDY) is important for ligand binding and specificity. A helical transmembrane segment spans residues 153-177 (VKALYTVGYSTSLVTLTTAMVILCR). Residues 178–187 (FRKLHCTRNF) lie on the Cytoplasmic side of the membrane. Residues 188 to 208 (IHMNLFVSFMLRAISVFIKDW) traverse the membrane as a helical segment. The Extracellular segment spans residues 209 to 223 (ILYAEQDSSHCFVST). A helical membrane pass occupies residues 224-249 (VECKAVMVFFHYCVVSNYFWLFIEGL). Cysteines 226 and 296 form a disulfide. Topologically, residues 250-267 (YLFTLLVETFFPERRYFY) are cytoplasmic. A helical membrane pass occupies residues 268–290 (WYTIIGWGTPTVCVTVWAVLRLY). Over 291–302 (FDDAGCWDMNDS) the chain is Extracellular. Residues 303 to 329 (TALWWVIKGPVVGSIMVNFVLFIGIII) form a helical membrane-spanning segment. Over 330 to 347 (ILVQKLQSPDMGGNESSI) the chain is Cytoplasmic. A helical membrane pass occupies residues 348–402 (YFSCVQKCYCKPQRAQQHSCKMSELSTITLRLARSTLLLIPLFGIHYTVFAFSPE). At 403–407 (NVSKR) the chain is on the extracellular side. Residues 408 to 431 (ERLVFELGLGSFQGFVVAVLYCFL) traverse the membrane as a helical segment. Residues 432-496 (NGEVQAEIKR…SSLPADNLAT (65 aa)) lie on the Cytoplasmic side of the membrane. Phosphoserine is present on residues Ser462 and Ser475.

The protein belongs to the G-protein coupled receptor 2 family. In terms of assembly, interacts with maxadilan, a vasodilator peptide from Lutzomyia longipalpis saliva; the interaction results in ADCYAP1R1 activation.

The protein resides in the cell membrane. G protein-coupled receptor activated by the neuropeptide pituitary adenylate cyclase-activating polypeptide (ADCYAP1/PACAP). Binds both PACAP27 and PACAP38 bioactive peptides. Ligand binding causes a conformation change that triggers signaling via guanine nucleotide-binding proteins (G proteins) and modulates the activity of downstream effectors. Activates cAMP-dependent pathway. May regulate the release of adrenocorticotropin, luteinizing hormone, growth hormone, prolactin, epinephrine, and catecholamine. May play a role in spermatogenesis and sperm motility. Causes smooth muscle relaxation and secretion in the gastrointestinal tract. The polypeptide is Pituitary adenylate cyclase-activating polypeptide type I receptor (Mus musculus (Mouse)).